The chain runs to 328 residues: DNA-directed RNA polymerase subunit alpha (328 aa).

The segment at 1-230 (MNKIKITPSV…QSQMEIFTND (230 aa)) is alpha N-terminal domain (alpha-NTD). Residues 243–328 (NSEIFYQPLD…ILKKIEQNKS (86 aa)) form an alpha C-terminal domain (alpha-CTD) region.

The protein belongs to the RNA polymerase alpha chain family. Homodimer. The RNAP catalytic core consists of 2 alpha, 1 beta, 1 beta' and 1 omega subunit. When a sigma factor is associated with the core the holoenzyme is formed, which can initiate transcription.

The enzyme catalyses RNA(n) + a ribonucleoside 5'-triphosphate = RNA(n+1) + diphosphate. Its function is as follows. DNA-dependent RNA polymerase catalyzes the transcription of DNA into RNA using the four ribonucleoside triphosphates as substrates. This Nitratiruptor sp. (strain SB155-2) protein is DNA-directed RNA polymerase subunit alpha.